Reading from the N-terminus, the 620-residue chain is Chaperone protein HscA homolog (620 aa).

It belongs to the heat shock protein 70 family.

Its function is as follows. Chaperone involved in the maturation of iron-sulfur cluster-containing proteins. Has a low intrinsic ATPase activity which is markedly stimulated by HscB. The polypeptide is Chaperone protein HscA homolog (Pseudomonas fluorescens (strain ATCC BAA-477 / NRRL B-23932 / Pf-5)).